The chain runs to 331 residues: Pectinesterase (331 aa).

A signal peptide spans 1–17 (MVKSILASVLFAATALA). Residue Gln138 participates in substrate binding. The Proton donor role is filled by Asp161. The active-site Nucleophile is Asp182. 2 residues coordinate substrate: Arg247 and Trp249.

It belongs to the pectinesterase family.

It is found in the secreted. The enzyme catalyses [(1-&gt;4)-alpha-D-galacturonosyl methyl ester](n) + n H2O = [(1-&gt;4)-alpha-D-galacturonosyl](n) + n methanol + n H(+). Its pathway is glycan metabolism; pectin degradation; 2-dehydro-3-deoxy-D-gluconate from pectin: step 1/5. Its function is as follows. Involved in maceration and soft-rotting of plant tissue. The protein is Pectinesterase (pme1) of Aspergillus niger.